We begin with the raw amino-acid sequence, 208 residues long: MAVYVEDHPLIKHKLGLMRQKDISTKDFRDLASEVAGLLTYEATQDMETEVATIDGWAGPVQVERIKGKKITIVPILRAGLGMMDGVINLIPSAKVSVVGFYRDEKTLQPVQYYVKTASAMDERIALILDPMLATGGTLLATIELLKASGCTRIKGLFLVAAPEGIEKIQKAHPDVDIYVAAIDERLNEVGYILPGLGDAGDKIFGTK.

Residues Arg-78, Arg-103, and 130-138 each bind 5-phospho-alpha-D-ribose 1-diphosphate; that span reads DPMLATGGT. Residues Ile-193 and 198–200 each bind uracil; that span reads GDA. Asp-199 serves as a coordination point for 5-phospho-alpha-D-ribose 1-diphosphate.

Belongs to the UPRTase family. It depends on Mg(2+) as a cofactor.

The catalysed reaction is UMP + diphosphate = 5-phospho-alpha-D-ribose 1-diphosphate + uracil. It participates in pyrimidine metabolism; UMP biosynthesis via salvage pathway; UMP from uracil: step 1/1. Allosterically activated by GTP. Its function is as follows. Catalyzes the conversion of uracil and 5-phospho-alpha-D-ribose 1-diphosphate (PRPP) to UMP and diphosphate. In Desulforapulum autotrophicum (strain ATCC 43914 / DSM 3382 / VKM B-1955 / HRM2) (Desulfobacterium autotrophicum), this protein is Uracil phosphoribosyltransferase.